Reading from the N-terminus, the 245-residue chain is MIIPALDLIDGQVVRLHQGDYGQQRQYGSDPLPRLQDYQQQGAGVLHLVDLTGAKDPSARQIPLLTTLLAGVSVPVQIGGGIRTEQDVEALLKAGASRVVIGSTAVKQPELVQQWFTRYGAEALVLALDVRIDANGTKFVAISGWQENSDATLEQVVEQYLPFGLKHVLCTDISRDGTLSGSNVELYREISQRYPQIAFQASGGIGNLTDIANLRGSGVQGVIVGRALLEGKFNVAEAISCWQNG.

The Proton acceptor role is filled by Asp-7. Asp-129 (proton donor) is an active-site residue.

It belongs to the HisA/HisF family.

It localises to the cytoplasm. The enzyme catalyses 1-(5-phospho-beta-D-ribosyl)-5-[(5-phospho-beta-D-ribosylamino)methylideneamino]imidazole-4-carboxamide = 5-[(5-phospho-1-deoxy-D-ribulos-1-ylimino)methylamino]-1-(5-phospho-beta-D-ribosyl)imidazole-4-carboxamide. Its pathway is amino-acid biosynthesis; L-histidine biosynthesis; L-histidine from 5-phospho-alpha-D-ribose 1-diphosphate: step 4/9. The sequence is that of 1-(5-phosphoribosyl)-5-[(5-phosphoribosylamino)methylideneamino] imidazole-4-carboxamide isomerase from Pectobacterium carotovorum subsp. carotovorum (strain PC1).